Consider the following 743-residue polypeptide: Type VI secretion system spike protein VgrG1 (743 aa).

It belongs to the VgrG protein family.

It localises to the secreted. It carries out the reaction L-arginyl-[protein] + NAD(+) = N(omega)-(ADP-D-ribosyl)-L-arginyl-[protein] + nicotinamide + H(+). Part of the type VI secretion system specialized secretion system, which delivers several virulence factors in both prokaryotic and eukaryotic cells during infection. Acts directly as an secreted effector with an actin ADP-ribosyltransferase activity that disrupts the host actin cytoskeleton, leading to a decrease in host cell viability and an increase in apoptosis. The chain is Type VI secretion system spike protein VgrG1 (vgrG1) from Aeromonas hydrophila subsp. hydrophila (strain ATCC 7966 / DSM 30187 / BCRC 13018 / CCUG 14551 / JCM 1027 / KCTC 2358 / NCIMB 9240 / NCTC 8049).